The primary structure comprises 166 residues: NAD(P)H-quinone oxidoreductase subunit I, chloroplastic (166 aa).

4Fe-4S ferredoxin-type domains lie at 55–84 and 95–124; these read GRIH…VDWK and LNYS…MTEE. The [4Fe-4S] cluster site is built by C64, C67, C70, C74, C104, C107, C110, and C114.

The protein belongs to the complex I 23 kDa subunit family. NDH is composed of at least 16 different subunits, 5 of which are encoded in the nucleus. The cofactor is [4Fe-4S] cluster.

The protein localises to the plastid. It localises to the chloroplast thylakoid membrane. It carries out the reaction a plastoquinone + NADH + (n+1) H(+)(in) = a plastoquinol + NAD(+) + n H(+)(out). The catalysed reaction is a plastoquinone + NADPH + (n+1) H(+)(in) = a plastoquinol + NADP(+) + n H(+)(out). Its function is as follows. NDH shuttles electrons from NAD(P)H:plastoquinone, via FMN and iron-sulfur (Fe-S) centers, to quinones in the photosynthetic chain and possibly in a chloroplast respiratory chain. The immediate electron acceptor for the enzyme in this species is believed to be plastoquinone. Couples the redox reaction to proton translocation, and thus conserves the redox energy in a proton gradient. This is NAD(P)H-quinone oxidoreductase subunit I, chloroplastic from Laphamia lindheimeri (Lindheimer's rockdaisy).